Here is a 129-residue protein sequence, read N- to C-terminus: Fluoride-specific ion channel FluC 2 (129 aa).

The next 4 helical transmembrane spans lie at 3-23 (FLYVGIFGALGGMCRYAMNLW), 32-52 (ATLAVNLIGCFLLAFIMPFLA), 59-79 (LVLLNGIGTGFIGAFTTFSAF), and 90-110 (GEVVLAISYILVSLIGGLVMV). 2 residues coordinate Na(+): Gly71 and Thr74.

Belongs to the fluoride channel Fluc/FEX (TC 1.A.43) family.

It is found in the cell membrane. The enzyme catalyses fluoride(in) = fluoride(out). Its activity is regulated as follows. Na(+) is not transported, but it plays an essential structural role and its presence is essential for fluoride channel function. Its function is as follows. Fluoride-specific ion channel. Important for reducing fluoride concentration in the cell, thus reducing its toxicity. The chain is Fluoride-specific ion channel FluC 2 from Listeria innocua serovar 6a (strain ATCC BAA-680 / CLIP 11262).